The chain runs to 1251 residues: Probable transcription factor TDA9 (1251 aa).

2 C2H2-type zinc fingers span residues 61 to 83 (FLCH…QRAH) and 89 to 112 (FLCV…HKLH). Disordered stretches follow at residues 160 to 227 (VQLK…KSKR) and 398 to 428 (NHSH…IEKS). The span at 164 to 173 (KAAKEKKNGK) shows a compositional bias: basic residues. The segment covering 183–202 (YGANNHSTDVSPSVGNSSTP) has biased composition (polar residues). Residues 407-428 (NNSSSGINYSNNKNNNESIEKS) are compositionally biased toward low complexity. A phosphoserine mark is found at serine 527 and serine 603. A compositionally biased stretch (low complexity) spans 617-634 (SLTPSLTTQTATTQSGPG). The interval 617-636 (SLTPSLTTQTATTQSGPGWT) is disordered.

The protein belongs to the RSF2/TDA9 family.

It localises to the nucleus. Functionally, DNA-binding protein that acts probably as a transcription factor. This Saccharomyces cerevisiae (strain ATCC 204508 / S288c) (Baker's yeast) protein is Probable transcription factor TDA9 (TDA9).